The following is a 515-amino-acid chain: uncharacterized protein (515 aa).

Disordered regions lie at residues 117–188, 362–453, and 496–515; these read DNIL…RKSQ, RSTS…AESM, and GNAVQEADTESMDDFMDYFN. 3 stretches are compositionally biased toward basic and acidic residues: residues 370–380, 388–402, and 428–438; these read KNVESETKQEE, PAEDETPPMKEEVIE, and PIKEIEDKVEP. Residues 502 to 515 show a composition bias toward acidic residues; the sequence is ADTESMDDFMDYFN.

This is an uncharacterized protein from Ostreid herpesvirus 1 (isolate France) (OsHV-1).